We begin with the raw amino-acid sequence, 72 residues long: UPF0154 protein BLi02038/BL02936 (72 aa).

A helical transmembrane segment spans residues 4–24; that stretch reads WVVILVGVLALLAGVALGFFI.

It belongs to the UPF0154 family.

It is found in the cell membrane. In Bacillus licheniformis (strain ATCC 14580 / DSM 13 / JCM 2505 / CCUG 7422 / NBRC 12200 / NCIMB 9375 / NCTC 10341 / NRRL NRS-1264 / Gibson 46), this protein is UPF0154 protein BLi02038/BL02936.